The primary structure comprises 240 residues: Small ribosomal subunit protein uS2 (240 aa).

It belongs to the universal ribosomal protein uS2 family. In terms of assembly, component of the small ribosomal subunit. Mature ribosomes consist of a small (40S) and a large (60S) subunit. The 40S subunit contains about 33 different proteins and 1 molecule of RNA (18S). The 60S subunit contains about 49 different proteins and 3 molecules of RNA (25S, 5.8S and 5S). Interacts with RPS21.

The protein localises to the cytoplasm. Its function is as follows. Required for the assembly and/or stability of the 40S ribosomal subunit. Required for the processing of the 20S rRNA-precursor to mature 18S rRNA in a late step of the maturation of 40S ribosomal subunits. The chain is Small ribosomal subunit protein uS2 from Enterocytozoon bieneusi (strain H348) (Microsporidian parasite).